The chain runs to 332 residues: CMRF35-like molecule 9 (332 aa).

Positions 1 to 18 are cleaved as a signal peptide; the sequence is MRLLVLLWGCLLLPGYEA. An Ig-like V-type domain is found at 19–121; sequence LEGPEEISGF…RGPDESLLIS (103 aa). The Extracellular segment spans residues 19-247; the sequence is LEGPEEISGF…KPRVSIPMVR (229 aa). An intrachain disulfide couples C37 to C107. N96 is a glycosylation site (N-linked (GlcNAc...) asparagine). Residues T137, T143, T144, T155, T161, T170, T171, T177, T187, and T195 are each glycosylated (O-linked (GalNAc...) threonine). The interval 146 to 239 is disordered; sequence LQPKAKAQQT…PALSSGSSKP (94 aa). The span at 147 to 158 shows a compositional bias: low complexity; that stretch reads QPKAKAQQTQPP. Positions 168-181 are enriched in low complexity; sequence AATTAKQGKTGAEA. Over residues 186–205 the composition is skewed to polar residues; that stretch reads GTSQYGHERTSQYTGTSPHP. O-linked (GalNAc...) serine glycosylation occurs at S196. 2 O-linked (GalNAc...) threonine glycosylation sites follow: T199 and T201. S202 is a glycosylation site (O-linked (GalNAc...) serine). T207 carries O-linked (GalNAc...) threonine glycosylation. Residues S208, S213, S214, and S222 are each glycosylated (O-linked (GalNAc...) serine). Residues 220-239 show a composition bias toward polar residues; that stretch reads LDSTSAEDTSPALSSGSSKP. T223 carries an O-linked (GalNAc...) threonine glycan. Residue S224 is glycosylated (O-linked (GalNAc...) serine). A glycan (O-linked (GalNAc...) threonine) is linked at T228. 2 O-linked (GalNAc...) serine glycosylation sites follow: S229 and S237. Residues 248–268 form a helical membrane-spanning segment; that stretch reads ILAPVLVLLSLLSAAGLIAFC. The Cytoplasmic segment spans residues 269-332; it reads SHLLLWRKEA…ELGFSKFVSA (64 aa).

It belongs to the CD300 family. In terms of processing, O-glycosylated with sialylated oligosaccharides. In terms of tissue distribution, highly expressed in heart, skeletal muscle and placenta.

The protein localises to the apical cell membrane. Its subcellular location is the basolateral cell membrane. The protein resides in the endosome. It localises to the multivesicular body membrane. Its function is as follows. Receptor which may mediate L-selectin-dependent lymphocyte rollings. Binds SELL in a calcium dependent manner. Binds lymphocyte. The polypeptide is CMRF35-like molecule 9 (CD300LG) (Homo sapiens (Human)).